Reading from the N-terminus, the 345-residue chain is Gibberellin 2-beta-dioxygenase 2 (345 aa).

Residues 170–285 (HSDSLLRINH…RMSMMYFAAP (116 aa)) enclose the Fe2OG dioxygenase domain. 3 residues coordinate Fe cation: His-209, Asp-211, and His-266. The active site involves Arg-276.

It belongs to the iron/ascorbate-dependent oxidoreductase family. GA2OX subfamily. Fe cation serves as cofactor. Predominantly expressed in leaves.

The catalysed reaction is gibberellin A1 + 2-oxoglutarate + O2 = gibberellin A8 + succinate + CO2. It functions in the pathway plant hormone biosynthesis; gibberellin biosynthesis. Its function is as follows. Catalyzes the 2-beta-hydroxylation of several biologically active gibberellins, leading to the homeostatic regulation of their endogenous level. Catabolism of gibberellins (GAs) plays a central role in plant development. Converts GA9/GA20 to GA51/GA29 and GA4/GA1 to GA34/GA8. The polypeptide is Gibberellin 2-beta-dioxygenase 2 (GA2OX2) (Pisum sativum (Garden pea)).